Consider the following 563-residue polypeptide: Eukaryotic translation initiation factor 3 subunit D-1 (563 aa).

The disordered stretch occupies residues 98–167 (VQKPPHQRGR…GPPPKMRESS (70 aa)). A compositionally biased stretch (basic residues) spans 100-121 (KPPHQRGRFRNMRNSRSGRGRN). Threonine 128 is subject to Phosphothreonine. Residues 291 to 305 (EFDLLTVNETSVEPP) are RNA gate.

Belongs to the eIF-3 subunit D family. As to quaternary structure, component of the eukaryotic translation initiation factor 3 (eIF-3) complex. The eIF-3 complex interacts with pix.

It localises to the cytoplasm. MRNA cap-binding component of the eukaryotic translation initiation factor 3 (eIF-3) complex, which is involved in protein synthesis of a specialized repertoire of mRNAs and, together with other initiation factors, stimulates binding of mRNA and methionyl-tRNAi to the 40S ribosome. The eIF-3 complex specifically targets and initiates translation of a subset of mRNAs involved in cell proliferation. In the eIF-3 complex, eif3d specifically recognizes and binds the 7-methylguanosine cap of a subset of mRNAs. This chain is Eukaryotic translation initiation factor 3 subunit D-1, found in Drosophila mojavensis (Fruit fly).